A 292-amino-acid chain; its full sequence is Alpha-soluble NSF attachment protein (292 aa).

Serine 2 is subject to N-acetylserine. A Glycyl lysine isopeptide (Lys-Gly) (interchain with G-Cter in ubiquitin) cross-link involves residue lysine 261.

This sequence belongs to the SNAP family. As to quaternary structure, binds to vacuolar cis-SNARE complexes composed of the v-SNAREs NYV1, VTI1 and YKT6, and the t-SNAREs VAM3 and VAM7. Interacts with SEC18.

It localises to the membrane. Its function is as follows. SNARE complex protein that binds to cis-SNARE complexes on membranes and is required for vesicular transport between the endoplasmic reticulum and the Golgi apparatus and for homotypic vacuole fusion. During the priming step of membrane fusion, is released from cis-SNARE complexes by SEC18 to establish a pool of unpaired SNAREs, which are required for interactions in trans during docking and fusion steps. Can displace HOPS from SNARE complexes, which may be a prerequisite for trans-SNARE complex disassembly and subsequent rounds of priming, docking and fusion. This chain is Alpha-soluble NSF attachment protein (SEC17), found in Saccharomyces cerevisiae (strain ATCC 204508 / S288c) (Baker's yeast).